The sequence spans 224 residues: Vacuolar protein-sorting-associated protein 24 (224 aa).

A Glycyl lysine isopeptide (Lys-Gly) (interchain with G-Cter in ubiquitin) cross-link involves residue Lys-203.

The protein belongs to the SNF7 family. Core component of the ESCRT-III complex (endosomal sorting required for transport complex III). ESCRT-III appears to be sequentially assembled as a flat lattice on the endosome membrane and forms a transient 450 kDa complex that contains DID4, oligomerized SNF7, VPS20 and VPS24. SNF7 oligomerization into a membrane-associated filament is nucleated by association of SNF7 with VPS20; the process is terminated through association of VPS24, possibly by capping the SNF7 filament. VPS24 subsequently associates with DID4/VPS2. Interacts with the VPS4. Interacts with DID2.

The protein localises to the endosome membrane. It localises to the endomembrane system. Class E VPS protein implicated in concentration and sorting of cargo proteins of the multivesicular body (MVB) for incorporation into intralumenal vesicles. The lumenal sequestrated membrane proteins will be targeted into the vacuole after fusion of the endosome with the vacuole. Acts a component of the ESCRT-III complex, which appears to be critical for late steps in MVB sorting, such as membrane invagination and final cargo sorting and recruitment oflate-acting components of the sorting machinery. The MVB pathway requires the sequential function of ESCRT-O, -I,-II and -III complex assemblies. The DID4/VPS2-VPS24 subcomplex is required for the VPS4-dependent dissociation of ESCRT-III. This chain is Vacuolar protein-sorting-associated protein 24 (VPS24), found in Saccharomyces cerevisiae (strain ATCC 204508 / S288c) (Baker's yeast).